We begin with the raw amino-acid sequence, 406 residues long: Arginine deiminase (406 aa).

Residue Cys-396 is the Amidino-cysteine intermediate of the active site.

This sequence belongs to the arginine deiminase family.

The protein localises to the cytoplasm. It carries out the reaction L-arginine + H2O = L-citrulline + NH4(+). Its pathway is amino-acid degradation; L-arginine degradation via ADI pathway; carbamoyl phosphate from L-arginine: step 1/2. The protein is Arginine deiminase of Salmonella typhimurium (strain LT2 / SGSC1412 / ATCC 700720).